The following is a 297-amino-acid chain: Pyridoxal 5'-phosphate synthase subunit Pdx1 (297 aa).

Aspartate 27 contacts D-ribose 5-phosphate. The active-site Schiff-base intermediate with D-ribose 5-phosphate is the lysine 84. Glycine 156 provides a ligand contact to D-ribose 5-phosphate. Arginine 168 contacts D-glyceraldehyde 3-phosphate. D-ribose 5-phosphate is bound by residues glycine 217 and 238 to 239 (GS).

The protein belongs to the PdxS/SNZ family. As to quaternary structure, homohexamer and homododecamer. In the presence of Pdx2, forms a dodecamer of heterodimers.

The enzyme catalyses aldehydo-D-ribose 5-phosphate + D-glyceraldehyde 3-phosphate + L-glutamine = pyridoxal 5'-phosphate + L-glutamate + phosphate + 3 H2O + H(+). The protein operates within cofactor biosynthesis; pyridoxal 5'-phosphate biosynthesis. Functionally, catalyzes the formation of pyridoxal 5'-phosphate from ribose 5-phosphate (RBP), glyceraldehyde 3-phosphate (G3P) and ammonia. The ammonia is provided by Pdx2. Can also use ribulose 5-phosphate and dihydroxyacetone phosphate as substrates, resulting from enzyme-catalyzed isomerization of RBP and G3P, respectively. The sequence is that of Pyridoxal 5'-phosphate synthase subunit Pdx1 from Plasmodium berghei.